The sequence spans 96 residues: Large ribosomal subunit protein bL28 (96 aa).

Positions 1–22 (MSRSCELTGKGVQSGNNVSHAN) are enriched in polar residues. The tract at residues 1–24 (MSRSCELTGKGVQSGNNVSHANNK) is disordered.

It belongs to the bacterial ribosomal protein bL28 family.

The polypeptide is Large ribosomal subunit protein bL28 (Rhizobium meliloti (strain 1021) (Ensifer meliloti)).